The following is a 163-amino-acid chain: Nucleotide-binding protein HDEF_1968 (163 aa).

This sequence belongs to the YajQ family.

In terms of biological role, nucleotide-binding protein. This Hamiltonella defensa subsp. Acyrthosiphon pisum (strain 5AT) protein is Nucleotide-binding protein HDEF_1968.